The primary structure comprises 109 residues: Phosphoribosyl-AMP cyclohydrolase (109 aa).

Residue Asp76 participates in Mg(2+) binding. Cys77 lines the Zn(2+) pocket. Mg(2+) is bound by residues Asp78 and Asp80. Residues Cys93 and Cys100 each contribute to the Zn(2+) site.

The protein belongs to the PRA-CH family. Homodimer. It depends on Mg(2+) as a cofactor. Zn(2+) serves as cofactor.

It localises to the cytoplasm. The catalysed reaction is 1-(5-phospho-beta-D-ribosyl)-5'-AMP + H2O = 1-(5-phospho-beta-D-ribosyl)-5-[(5-phospho-beta-D-ribosylamino)methylideneamino]imidazole-4-carboxamide. The protein operates within amino-acid biosynthesis; L-histidine biosynthesis; L-histidine from 5-phospho-alpha-D-ribose 1-diphosphate: step 3/9. Catalyzes the hydrolysis of the adenine ring of phosphoribosyl-AMP. The sequence is that of Phosphoribosyl-AMP cyclohydrolase from Streptococcus mutans serotype c (strain ATCC 700610 / UA159).